We begin with the raw amino-acid sequence, 357 residues long: Probable dual-specificity RNA methyltransferase RlmN (357 aa).

E95 functions as the Proton acceptor in the catalytic mechanism. Positions 106-340 (NRDRHTVCVS…VSVREEKGTD (235 aa)) constitute a Radical SAM core domain. A disulfide bridge links C113 with C345. Residues C120, C124, and C127 each coordinate [4Fe-4S] cluster. Residues 172–173 (GE), S204, 227–229 (SLH), and N302 contribute to the S-adenosyl-L-methionine site. C345 serves as the catalytic S-methylcysteine intermediate.

Belongs to the radical SAM superfamily. RlmN family. Requires [4Fe-4S] cluster as cofactor.

The protein localises to the cytoplasm. The catalysed reaction is adenosine(2503) in 23S rRNA + 2 reduced [2Fe-2S]-[ferredoxin] + 2 S-adenosyl-L-methionine = 2-methyladenosine(2503) in 23S rRNA + 5'-deoxyadenosine + L-methionine + 2 oxidized [2Fe-2S]-[ferredoxin] + S-adenosyl-L-homocysteine. It catalyses the reaction adenosine(37) in tRNA + 2 reduced [2Fe-2S]-[ferredoxin] + 2 S-adenosyl-L-methionine = 2-methyladenosine(37) in tRNA + 5'-deoxyadenosine + L-methionine + 2 oxidized [2Fe-2S]-[ferredoxin] + S-adenosyl-L-homocysteine. Functionally, specifically methylates position 2 of adenine 2503 in 23S rRNA and position 2 of adenine 37 in tRNAs. The chain is Probable dual-specificity RNA methyltransferase RlmN from Desulfitobacterium hafniense (strain DSM 10664 / DCB-2).